Consider the following 137-residue polypeptide: ATP synthase epsilon chain, chloroplastic (137 aa).

This sequence belongs to the ATPase epsilon chain family. As to quaternary structure, F-type ATPases have 2 components, CF(1) - the catalytic core - and CF(0) - the membrane proton channel. CF(1) has five subunits: alpha(3), beta(3), gamma(1), delta(1), epsilon(1). CF(0) has three main subunits: a, b and c.

The protein localises to the plastid. The protein resides in the chloroplast thylakoid membrane. Its function is as follows. Produces ATP from ADP in the presence of a proton gradient across the membrane. The chain is ATP synthase epsilon chain, chloroplastic from Pinus koraiensis (Korean pine).